The sequence spans 329 residues: Beta-ketoacyl-[acyl-carrier-protein] synthase III (329 aa).

Active-site residues include Cys123 and His256. Positions 257–261 (QANIR) are ACP-binding. Residue Asn286 is part of the active site.

It belongs to the thiolase-like superfamily. FabH family. Homodimer.

The protein resides in the cytoplasm. The enzyme catalyses malonyl-[ACP] + acetyl-CoA + H(+) = 3-oxobutanoyl-[ACP] + CO2 + CoA. It participates in lipid metabolism; fatty acid biosynthesis. Its function is as follows. Catalyzes the condensation reaction of fatty acid synthesis by the addition to an acyl acceptor of two carbons from malonyl-ACP. Catalyzes the first condensation reaction which initiates fatty acid synthesis and may therefore play a role in governing the total rate of fatty acid production. Possesses both acetoacetyl-ACP synthase and acetyl transacylase activities. Its substrate specificity determines the biosynthesis of branched-chain and/or straight-chain of fatty acids. The polypeptide is Beta-ketoacyl-[acyl-carrier-protein] synthase III (Burkholderia mallei (strain NCTC 10247)).